The sequence spans 330 residues: MATH domain and coiled-coil domain-containing protein At3g58210 (330 aa).

One can recognise an MATH domain in the interval 6–133; sequence DNKFTWVIQN…NDELKIVAEV (128 aa). The stretch at 263–314 forms a coiled coil; sequence FKVDWLEKKLEEVKKKKEEEQTGEARIQELEEELKEFKQKCLDREAMLEKEK.

The protein is MATH domain and coiled-coil domain-containing protein At3g58210 of Arabidopsis thaliana (Mouse-ear cress).